The chain runs to 163 residues: Cytochrome c-type biogenesis protein CcmE (163 aa).

At 1 to 7 (MTRKQRR) the chain is on the cytoplasmic side. A helical; Signal-anchor for type II membrane protein membrane pass occupies residues 8–28 (LVFIGTCGAVLAVALGLVLWA). Topologically, residues 29–163 (MSGTIVFFRS…RTASGEARAP (135 aa)) are periplasmic. Heme-binding residues include H122 and Y126. A disordered region spans residues 134-163 (ALKKSGRWQEGAGHPAPAPPRTASGEARAP).

Belongs to the CcmE/CycJ family.

The protein resides in the cell inner membrane. In terms of biological role, heme chaperone required for the biogenesis of c-type cytochromes. Transiently binds heme delivered by CcmC and transfers the heme to apo-cytochromes in a process facilitated by CcmF and CcmH. This is Cytochrome c-type biogenesis protein CcmE from Methylobacterium sp. (strain 4-46).